The sequence spans 457 residues: Flavohemoprotein-2 (457 aa).

A Globin domain is found at 2 to 157 (ALSEDTIKAV…LADLLIKREE (156 aa)). His106 is a heme b binding site. Residues Tyr116 and Glu156 each act as charge relay system in the active site. Residues 168 to 456 (GGWRQTRTFR…FEMFGPFKAS (289 aa)) form a reductase region. The FAD-binding FR-type domain occupies 171 to 278 (RQTRTFRVEE…APPYGDFFLR (108 aa)). Residues Tyr210 and 227–230 (RQYS) contribute to the FAD site. 320–325 (GIGQTP) lines the NADP(+) pocket. 449–452 (MFGP) serves as a coordination point for FAD.

Belongs to the globin family. Two-domain flavohemoproteins subfamily. This sequence in the C-terminal section; belongs to the flavoprotein pyridine nucleotide cytochrome reductase family. Monomer. Heme b serves as cofactor. The cofactor is FAD.

It catalyses the reaction 2 nitric oxide + NADPH + 2 O2 = 2 nitrate + NADP(+) + H(+). The enzyme catalyses 2 nitric oxide + NADH + 2 O2 = 2 nitrate + NAD(+) + H(+). In terms of biological role, flavohemoprotein involved in nitric oxide (NO) detoxification in an aerobic process, termed nitric oxide dioxygenase (NOD) reaction that utilizes O(2) and NAD(P)H to convert NO to nitrate, which protects the protozoan parasite from various noxious nitrogen compounds. Therefore, plays a central role in the inducible response to nitrosative stress. May also be involved in O(2) detoxification. This chain is Flavohemoprotein-2 (hmpA-2), found in Giardia intestinalis (strain P15) (Giardia lamblia).